The sequence spans 775 residues: Mitosis inducer protein kinase cdr2 (775 aa).

Residues 10–262 form the Protein kinase domain; it reads WELGLSLGSG…MEQIREHPFL (253 aa). ATP-binding positions include 16-24 and Lys-39; that span reads LGSGGPNSS. The active-site Proton acceptor is the Asp-133. 3 positions are modified to phosphoserine: Ser-309, Ser-311, and Ser-476. Residues 549–563 are compositionally biased toward low complexity; that stretch reads NNIDNNNYNQPYANA. Residues 549–620 form a disordered region; that stretch reads NNIDNNNYNQ…TKKKLSGSPF (72 aa). Residues 584–593 are compositionally biased toward polar residues; that stretch reads LSQSPASYDS. Residues Ser-587 and Ser-632 each carry the phosphoserine modification.

The protein belongs to the protein kinase superfamily. CAMK Ser/Thr protein kinase family. NIM1 subfamily. In terms of assembly, interacts with blt1 and mid1. In terms of processing, autophosphorylated.

It catalyses the reaction L-seryl-[protein] + ATP = O-phospho-L-seryl-[protein] + ADP + H(+). It carries out the reaction L-threonyl-[protein] + ATP = O-phospho-L-threonyl-[protein] + ADP + H(+). In terms of biological role, acts as a mitotic inducer. In G2 it negatively regulates wee1, a mitotic inhibitor. Also has a role in cytokinesis where it required for proper septum formation. In Schizosaccharomyces pombe (strain 972 / ATCC 24843) (Fission yeast), this protein is Mitosis inducer protein kinase cdr2 (cdr2).